A 505-amino-acid chain; its full sequence is ATP synthase subunit beta (505 aa).

157 to 164 (GGAGVGKT) contacts ATP.

Belongs to the ATPase alpha/beta chains family. As to quaternary structure, F-type ATPases have 2 components, CF(1) - the catalytic core - and CF(0) - the membrane proton channel. CF(1) has five subunits: alpha(3), beta(3), gamma(1), delta(1), epsilon(1). CF(0) has three main subunits: a(1), b(2) and c(9-12). The alpha and beta chains form an alternating ring which encloses part of the gamma chain. CF(1) is attached to CF(0) by a central stalk formed by the gamma and epsilon chains, while a peripheral stalk is formed by the delta and b chains.

It is found in the cell inner membrane. It catalyses the reaction ATP + H2O + 4 H(+)(in) = ADP + phosphate + 5 H(+)(out). Functionally, produces ATP from ADP in the presence of a proton gradient across the membrane. The catalytic sites are hosted primarily by the beta subunits. The sequence is that of ATP synthase subunit beta from Bacteroides fragilis (strain ATCC 25285 / DSM 2151 / CCUG 4856 / JCM 11019 / LMG 10263 / NCTC 9343 / Onslow / VPI 2553 / EN-2).